The following is a 326-amino-acid chain: Lipoyl synthase (326 aa).

[4Fe-4S] cluster contacts are provided by cysteine 74, cysteine 79, cysteine 85, cysteine 100, cysteine 104, cysteine 107, and serine 314. Residues 85 to 303 enclose the Radical SAM core domain; the sequence is CFGKGTATFM…EEEAYKMGFT (219 aa).

Belongs to the radical SAM superfamily. Lipoyl synthase family. [4Fe-4S] cluster serves as cofactor.

The protein localises to the cytoplasm. It carries out the reaction [[Fe-S] cluster scaffold protein carrying a second [4Fe-4S](2+) cluster] + N(6)-octanoyl-L-lysyl-[protein] + 2 oxidized [2Fe-2S]-[ferredoxin] + 2 S-adenosyl-L-methionine + 4 H(+) = [[Fe-S] cluster scaffold protein] + N(6)-[(R)-dihydrolipoyl]-L-lysyl-[protein] + 4 Fe(3+) + 2 hydrogen sulfide + 2 5'-deoxyadenosine + 2 L-methionine + 2 reduced [2Fe-2S]-[ferredoxin]. The protein operates within protein modification; protein lipoylation via endogenous pathway; protein N(6)-(lipoyl)lysine from octanoyl-[acyl-carrier-protein]: step 2/2. In terms of biological role, catalyzes the radical-mediated insertion of two sulfur atoms into the C-6 and C-8 positions of the octanoyl moiety bound to the lipoyl domains of lipoate-dependent enzymes, thereby converting the octanoylated domains into lipoylated derivatives. The polypeptide is Lipoyl synthase (Delftia acidovorans (strain DSM 14801 / SPH-1)).